Here is a 111-residue protein sequence, read N- to C-terminus: Succinate dehydrogenase assembly factor 1B, mitochondrial (111 aa).

It belongs to the complex I LYR family. SDHAF1 subfamily. In terms of assembly, interacts with the iron-sulfur protein subunit within the SDH catalytic dimer.

It localises to the mitochondrion matrix. Functionally, plays an essential role in the assembly of succinate dehydrogenase (SDH), an enzyme complex (also referred to as respiratory complex II) that is a component of both the tricarboxylic acid (TCA) cycle and the mitochondrial electron transport chain, and which couples the oxidation of succinate to fumarate with the reduction of ubiquinone (coenzyme Q) to ubiquinol. Promotes maturation of the iron-sulfur protein subunit of the SDH catalytic dimer, protecting it from the deleterious effects of oxidants. May act together with SDHAF3. This chain is Succinate dehydrogenase assembly factor 1B, mitochondrial, found in Dictyostelium discoideum (Social amoeba).